Consider the following 131-residue polypeptide: Large ribosomal subunit protein bL12c (131 aa).

It belongs to the bacterial ribosomal protein bL12 family. In terms of assembly, homodimer. Part of the ribosomal stalk of the 50S ribosomal subunit. Forms a multimeric L10(L12)X complex, where L10 forms an elongated spine to which 2 to 4 L12 dimers bind in a sequential fashion. Binds GTP-bound translation factors.

The protein resides in the plastid. It is found in the chloroplast. In terms of biological role, forms part of the ribosomal stalk which helps the ribosome interact with GTP-bound translation factors. Is thus essential for accurate translation. The sequence is that of Large ribosomal subunit protein bL12c from Euglena gracilis.